The primary structure comprises 69 residues: Putative membrane protein insertion efficiency factor (69 aa).

Belongs to the UPF0161 family.

The protein resides in the cell membrane. In terms of biological role, could be involved in insertion of integral membrane proteins into the membrane. This chain is Putative membrane protein insertion efficiency factor, found in Thermoanaerobacter pseudethanolicus (strain ATCC 33223 / 39E) (Clostridium thermohydrosulfuricum).